Consider the following 633-residue polypeptide: DNA mismatch repair protein MutL (633 aa).

2 disordered regions span residues Val336–Gly364 and Gly384–Glu405. A compositionally biased stretch (low complexity) spans Gly388 to Tyr401.

This sequence belongs to the DNA mismatch repair MutL/HexB family.

Functionally, this protein is involved in the repair of mismatches in DNA. It is required for dam-dependent methyl-directed DNA mismatch repair. May act as a 'molecular matchmaker', a protein that promotes the formation of a stable complex between two or more DNA-binding proteins in an ATP-dependent manner without itself being part of a final effector complex. This is DNA mismatch repair protein MutL from Pseudomonas paraeruginosa (strain DSM 24068 / PA7) (Pseudomonas aeruginosa (strain PA7)).